The primary structure comprises 1135 residues: DNA-directed RNA polymerase subunit beta' (1135 aa).

4 residues coordinate Zn(2+): C60, C62, C75, and C78. Residues D450, D452, and D454 each coordinate Mg(2+). Residues C795, C869, C876, and C879 each coordinate Zn(2+).

It belongs to the RNA polymerase beta' chain family. The RNAP catalytic core consists of 2 alpha, 1 beta, 1 beta' and 1 omega subunit. When a sigma factor is associated with the core the holoenzyme is formed, which can initiate transcription. Mg(2+) serves as cofactor. Requires Zn(2+) as cofactor.

It catalyses the reaction RNA(n) + a ribonucleoside 5'-triphosphate = RNA(n+1) + diphosphate. Its function is as follows. DNA-dependent RNA polymerase catalyzes the transcription of DNA into RNA using the four ribonucleoside triphosphates as substrates. This chain is DNA-directed RNA polymerase subunit beta', found in Clostridium tetani (strain Massachusetts / E88).